The primary structure comprises 42 residues: Photosystem II reaction center protein J (42 aa).

The helical transmembrane segment at 10 to 30 (IPLWIIGTLAGTLVIGLLAIF) threads the bilayer.

This sequence belongs to the PsbJ family. PSII is composed of 1 copy each of membrane proteins PsbA, PsbB, PsbC, PsbD, PsbE, PsbF, PsbH, PsbI, PsbJ, PsbK, PsbL, PsbM, PsbT, PsbX, PsbY, PsbZ, Psb30/Ycf12, at least 3 peripheral proteins of the oxygen-evolving complex and a large number of cofactors. It forms dimeric complexes.

It is found in the plastid. The protein resides in the chloroplast thylakoid membrane. Its function is as follows. One of the components of the core complex of photosystem II (PSII). PSII is a light-driven water:plastoquinone oxidoreductase that uses light energy to abstract electrons from H(2)O, generating O(2) and a proton gradient subsequently used for ATP formation. It consists of a core antenna complex that captures photons, and an electron transfer chain that converts photonic excitation into a charge separation. The protein is Photosystem II reaction center protein J of Chaetosphaeridium globosum (Charophycean green alga).